Consider the following 410-residue polypeptide: S-adenosylmethionine synthase (410 aa).

An ATP-binding site is contributed by His-15. Position 17 (Asp-17) interacts with Mg(2+). Glu-43 is a binding site for K(+). Glu-56 and Gln-100 together coordinate L-methionine. The tract at residues 100-110 (QSPDIAKGVDT) is flexible loop. Residues 171–173 (DGK), 248–249 (KF), Asp-257, 263–264 (RK), Ala-280, and Lys-284 contribute to the ATP site. Position 257 (Asp-257) interacts with L-methionine. L-methionine is bound at residue Lys-288.

This sequence belongs to the AdoMet synthase family. As to quaternary structure, homotetramer; dimer of dimers. It depends on Mg(2+) as a cofactor. Requires K(+) as cofactor.

It is found in the cytoplasm. The enzyme catalyses L-methionine + ATP + H2O = S-adenosyl-L-methionine + phosphate + diphosphate. The protein operates within amino-acid biosynthesis; S-adenosyl-L-methionine biosynthesis; S-adenosyl-L-methionine from L-methionine: step 1/1. Functionally, catalyzes the formation of S-adenosylmethionine (AdoMet) from methionine and ATP. The overall synthetic reaction is composed of two sequential steps, AdoMet formation and the subsequent tripolyphosphate hydrolysis which occurs prior to release of AdoMet from the enzyme. This chain is S-adenosylmethionine synthase, found in Prochlorococcus marinus (strain MIT 9211).